A 118-amino-acid polypeptide reads, in one-letter code: UPF0102 protein ROP_66030 (118 aa).

This sequence belongs to the UPF0102 family.

In Rhodococcus opacus (strain B4), this protein is UPF0102 protein ROP_66030.